The sequence spans 601 residues: MTDIPIDRIRNFSIIAHIDHGKSTLADRLIQLTGALSDREMTNQVLDNMELERERGITIKAQTVRLTYRAKDGLVYALNLMDTPGHVDFAYEVSRSLAACEGSLLVVDASQGVEAQTLANVYQAIDANHEIVPVLNKVDLPAAEPDRVKKQIEDVIGLDASDALMISAKTGLGVDTVLEALVTRLPAPKGNANGELKALLVDSWYDAYLGVIILVRVKDGVLRRGQKIRMMSTGATYTVDQVGVFSPRMTPVETLNPGEMGYINAAIKTVADTNVGDTITDDRVPAAEPLAGFKPSIPVVWCGLYPIDADDFEKLRDSLGKLRLNDASFHFEAETSAALGFGFRCGFLGLLHLEIIQERLSREFDLDLIATAPSVVYKLHKTNGEHLELHNPADMPDGSVIEKIEEPWIKATIMVPDDYLGAILTLCSERRGQQVDLTYVGNRAMAVYRLPLNEVVFDFYDRLKSVSRGYASFDYQMDGYEESDLVRISILVNAEAVDALSFIAHRSAAENRGRQICAKLKELIPRQLFKIAIQAAIGSRIIARETLGALSKDVTAKCYGGDISRKRKLLEKQKEGKKRMRQFGKVEIPQSAFLAALKMDN.

Positions D7–K189 constitute a tr-type G domain. GTP-binding positions include D19 to T24 and N136 to D139.

This sequence belongs to the TRAFAC class translation factor GTPase superfamily. Classic translation factor GTPase family. LepA subfamily.

It is found in the cell inner membrane. The enzyme catalyses GTP + H2O = GDP + phosphate + H(+). Its function is as follows. Required for accurate and efficient protein synthesis under certain stress conditions. May act as a fidelity factor of the translation reaction, by catalyzing a one-codon backward translocation of tRNAs on improperly translocated ribosomes. Back-translocation proceeds from a post-translocation (POST) complex to a pre-translocation (PRE) complex, thus giving elongation factor G a second chance to translocate the tRNAs correctly. Binds to ribosomes in a GTP-dependent manner. This chain is Elongation factor 4, found in Granulibacter bethesdensis (strain ATCC BAA-1260 / CGDNIH1).